The following is a 901-amino-acid chain: Protein translocase subunit SecA (901 aa).

Residues glutamine 85, 103–107 (GEGKT), and aspartate 510 each bind ATP. The segment at 848 to 901 (RINQNNLPVDENSQTTQNSETEDYSDRRIGRNEPCPCGSGKKYKHCHGSRVARQ) is disordered. The segment covering 849–866 (INQNNLPVDENSQTTQNS) has biased composition (polar residues). Zn(2+) contacts are provided by cysteine 882, cysteine 884, cysteine 893, and histidine 894. Residues 888–901 (KKYKHCHGSRVARQ) show a composition bias toward basic residues.

The protein belongs to the SecA family. In terms of assembly, monomer and homodimer. Part of the essential Sec protein translocation apparatus which comprises SecA, SecYEG and auxiliary proteins SecDF-YajC and YidC. The cofactor is Zn(2+).

It localises to the cell inner membrane. The protein resides in the cytoplasm. It catalyses the reaction ATP + H2O + cellular proteinSide 1 = ADP + phosphate + cellular proteinSide 2.. Part of the Sec protein translocase complex. Interacts with the SecYEG preprotein conducting channel. Has a central role in coupling the hydrolysis of ATP to the transfer of proteins into and across the cell membrane, serving both as a receptor for the preprotein-SecB complex and as an ATP-driven molecular motor driving the stepwise translocation of polypeptide chains across the membrane. In Haemophilus influenzae (strain 86-028NP), this protein is Protein translocase subunit SecA.